The primary structure comprises 551 residues: Lysine--tRNA ligase (551 aa).

The 'HIGH' region signature appears at 54-62 (PSGLPHIGT). A 'KMSKS' region motif is present at residues 303–307 (KISKS). Residue lysine 306 participates in ATP binding.

The protein belongs to the class-I aminoacyl-tRNA synthetase family.

It localises to the cytoplasm. It carries out the reaction tRNA(Lys) + L-lysine + ATP = L-lysyl-tRNA(Lys) + AMP + diphosphate. This chain is Lysine--tRNA ligase, found in Brucella melitensis biotype 1 (strain ATCC 23456 / CCUG 17765 / NCTC 10094 / 16M).